Here is a 624-residue protein sequence, read N- to C-terminus: DNA mismatch repair protein MutL (624 aa).

Belongs to the DNA mismatch repair MutL/HexB family.

In terms of biological role, this protein is involved in the repair of mismatches in DNA. It is required for dam-dependent methyl-directed DNA mismatch repair. May act as a 'molecular matchmaker', a protein that promotes the formation of a stable complex between two or more DNA-binding proteins in an ATP-dependent manner without itself being part of a final effector complex. This is DNA mismatch repair protein MutL from Xanthomonas campestris pv. campestris (strain B100).